The following is a 392-amino-acid chain: Proteasomal ATPase-associated factor 1 (392 aa).

Ala2 bears the N-acetylalanine mark. 7 WD repeats span residues 82-121 (APYTTFSRIHTKSITCLDISSRGGLGVSSSTDGTMKIWQA), 125-163 (ELRRVLEGHVFDVNCCRFFPSGLVVLSGGMDAQLKIWSA), 167-205 (SCVVTFKGHKGGILDTAIVDRGRNVVSASRDGTARLWDC), 209-259 (ACLG…LARE), 270-308 (SRQLVFLFIGSDAFNCCTFLSGFLLLAGTQDGNIYQLDV), 313-349 (APVQVIHRSGAPVLSLLSVRDGFIASQGDGSCFIVQQ), and 353-389 (YVTELTGADCDPVYKVATWEKQIYTCCRDGLVRRYQL).

This sequence belongs to the WD repeat PAAF1/RPN14 family. In terms of assembly, interacts with PSMC1, PSMC2, PSMC3, PSMC4, PSMC5 and PSMC6. Interacts with SUPT6H. As to quaternary structure, (Microbial infection) Interacts with HIV-1 Tat. In terms of tissue distribution, ubiquitously expressed, with highest levels in kidney, brain and testis.

Functionally, inhibits proteasome 26S assembly and proteolytic activity by impairing the association of the 19S regulatory complex with the 20S core. In case of HIV-1 infection, recruited by viral Tat to the HIV-1 promoter, where it promotes the recruitment of 19S regulatory complex through dissociation of the proteasome 26S. This presumably promotes provirus transcription efficiency. Protects SUPT6H from proteasomal degradation. This Homo sapiens (Human) protein is Proteasomal ATPase-associated factor 1 (PAAF1).